We begin with the raw amino-acid sequence, 556 residues long: CTP synthase (556 aa).

An amidoligase domain region spans residues Met-1–Leu-266. Ser-12 provides a ligand contact to CTP. Ser-12 contacts UTP. Ser-13 to Val-18 is an ATP binding site. Tyr-53 serves as a coordination point for L-glutamine. Asp-70 contributes to the ATP binding site. 2 residues coordinate Mg(2+): Asp-70 and Glu-140. CTP contacts are provided by residues Asp-147–Glu-149, Lys-187–Gln-192, and Lys-223. Residues Lys-187–Gln-192 and Lys-223 each bind UTP. The 254-residue stretch at Thr-291–Ser-544 folds into the Glutamine amidotransferase type-1 domain. Gly-356 is an L-glutamine binding site. The Nucleophile; for glutamine hydrolysis role is filled by Cys-383. L-glutamine is bound by residues Leu-384–Gln-387, Glu-407, and Arg-467. Active-site residues include His-517 and Glu-519.

The protein belongs to the CTP synthase family. As to quaternary structure, homotetramer.

The catalysed reaction is UTP + L-glutamine + ATP + H2O = CTP + L-glutamate + ADP + phosphate + 2 H(+). The enzyme catalyses L-glutamine + H2O = L-glutamate + NH4(+). It carries out the reaction UTP + NH4(+) + ATP = CTP + ADP + phosphate + 2 H(+). Its pathway is pyrimidine metabolism; CTP biosynthesis via de novo pathway; CTP from UDP: step 2/2. Allosterically activated by GTP, when glutamine is the substrate; GTP has no effect on the reaction when ammonia is the substrate. The allosteric effector GTP functions by stabilizing the protein conformation that binds the tetrahedral intermediate(s) formed during glutamine hydrolysis. Inhibited by the product CTP, via allosteric rather than competitive inhibition. Its function is as follows. Catalyzes the ATP-dependent amination of UTP to CTP with either L-glutamine or ammonia as the source of nitrogen. Regulates intracellular CTP levels through interactions with the four ribonucleotide triphosphates. The chain is CTP synthase from Deinococcus deserti (strain DSM 17065 / CIP 109153 / LMG 22923 / VCD115).